The sequence spans 227 residues: Isopentenyl-diphosphate Delta-isomerase 1 (227 aa).

Position 36 (K36) interacts with substrate. Mg(2+) contacts are provided by H40 and H51. One can recognise a Nudix hydrolase domain in the interval 49–199 (LLHRAFSVFL…EVKLTPWFKI (151 aa)). Substrate is bound by residues R70 and K74. The active site involves C86. S87 is a binding site for substrate. 2 residues coordinate Mg(2+): E146 and E148. Residue E148 is part of the active site. Residue K176 is modified to N6-acetyllysine. A Microbody targeting signal motif is present at residues 225–227 (HRM).

The protein belongs to the IPP isomerase type 1 family. As to quaternary structure, monomer. Mg(2+) serves as cofactor.

The protein localises to the peroxisome. It carries out the reaction isopentenyl diphosphate = dimethylallyl diphosphate. Its pathway is isoprenoid biosynthesis; dimethylallyl diphosphate biosynthesis; dimethylallyl diphosphate from isopentenyl diphosphate: step 1/1. Catalyzes the 1,3-allylic rearrangement of the homoallylic substrate isopentenyl (IPP) to its highly electrophilic allylic isomer, dimethylallyl diphosphate (DMAPP). In Mesocricetus auratus (Golden hamster), this protein is Isopentenyl-diphosphate Delta-isomerase 1 (IDI1).